We begin with the raw amino-acid sequence, 485 residues long: Threonine synthase-like 2 (485 aa).

An N6-(pyridoxal phosphate)lysine modification is found at Lys-113.

The protein belongs to the threonine synthase family. The cofactor is pyridoxal 5'-phosphate.

Acts as a catabolic phospho-lyase on both gamma- and beta-phosphorylated substrates. Degrades O-phospho-threonine (PThr) to alpha-ketobutyrate, ammonia and phosphate. This Rattus norvegicus (Rat) protein is Threonine synthase-like 2 (Thnsl2).